A 686-amino-acid chain; its full sequence is Pentatricopeptide repeat-containing protein 1, mitochondrial (686 aa).

Over residues 55–67 the composition is skewed to polar residues; sequence RMSSLCSDSSTPV. Positions 55 to 79 are disordered; that stretch reads RMSSLCSDSSTPVAPQEEEEEESFG. PPR repeat units follow at residues 124–160, 161–195, 196–234, 235–269, and 270–306; these read TPYWYFLQCKRLLKEGKLAEALDLFERQMLKEERLQP, LECNYTVLIGGCGRVGYLKKAFRLFNDMKKRDLEP, SDATYTALFNVCAESPWKDSALQSALKLRQQLQAQNFQL, NLKTYHALLKVAAKCADLRVCLEVFKEIIQKGHAV, and TEETFCFLLMGCIQDKKTGFRQAMQVWRQMLSLGIKP. The interval 383-407 is disordered; sequence KLEGPPAFPEARETSRTQPEVETKA. Positions 392-407 are enriched in basic and acidic residues; sequence EARETSRTQPEVETKA. 2 PPR repeats span residues 508–542 and 575–609; these read DITFFNTLIRKKSKLGDLEGAKALLPILAKKGIVP and NTHIYSTLINAALKKLDYTYLISILKDMRRNSVPV.

Belongs to the PTCD1 family. Associates with mitochondrial leucine tRNAs. Interacts with ELAC2.

It is found in the mitochondrion matrix. Mitochondrial protein implicated in negative regulation of leucine tRNA levels, as well as negative regulation of mitochondria-encoded proteins and COX activity. Also affects the 3'-processing of mitochondrial tRNAs. The chain is Pentatricopeptide repeat-containing protein 1, mitochondrial (Ptcd1) from Rattus norvegicus (Rat).